The primary structure comprises 440 residues: MGHIKKGELTQEEKELLEVIGKGTVQEAGRLLSSKNVHVNCLDENGMTPLMHAAYKGKLEMCKLLLRHGADASCHQHEHGYTALMFAALSGNKDITWVMLEAGAETDVVNSVGRTAAQMAAFVGQHDCVAIINNFFPRERLDYYTKPQGLDKEPKLPPKLAGPLHKIITTTNLHPVKIVMLVSENPLLADAAALGKCYRVMDLICEKCMKQRDMNEVLAMKMHYISCIFQKCITFLKEGENKLDTLIRSLLKGRASDGFPVYQEKIIRESIRKFPYCEATLLQQLVRSIAPVEIGSDPTAFSVLTQAITGQVGFVDVEFCTTCGEKGASKRCSVCKMVIYCDQTCQKTHWFAHKKMCKSLKDVYEKQQIEAAKHKRQEEKNGNPNVSSNHVNEDQPEAEEGITQENSIPSDSVEGEKEAANDTGLASAQDAPTGPQLSEE.

3 ANK repeats span residues 45–74 (NGMT…DASC), 79–108 (HGYT…ETDV), and 159–188 (KLAG…NPLL). Positions 320, 323, 332, 335, 341, 345, 353, and 357 each coordinate Zn(2+). Residues 320–357 (CTTCGEKGASKRCSVCKMVIYCDQTCQKTHWFAHKKMC) form an MYND-type zinc finger. Over residues 371 to 381 (AAKHKRQEEKN) the composition is skewed to basic and acidic residues. A disordered region spans residues 371 to 440 (AAKHKRQEEK…APTGPQLSEE (70 aa)).

In terms of assembly, interacts with the retinal-specific guanylyl cyclase GC1.

The protein localises to the cell projection. It is found in the cilium. Functionally, may be involved in the trafficking of signaling proteins to the cilia. This Mus musculus (Mouse) protein is Ankyrin repeat and MYND domain-containing protein 2 (Ankmy2).